A 473-amino-acid polypeptide reads, in one-letter code: Photosystem II CP43 reaction center protein (473 aa).

The propeptide occupies 1–14; sequence MKTLYSLRRSYPVE. Thr-15 is modified (N-acetylthreonine). At Thr-15 the chain carries Phosphothreonine. 5 helical membrane-spanning segments follow: residues 69-93, 134-155, 178-200, 255-275, and 291-312; these read LFEVAHFVPEKPMYEQGLILLPHLA, LIGPETLEESFPFFGYVWKDKN, KALYFGGLYDTWAPGGGDVRKIT, KPFAWARRAFVWSGEAYLSYS, and WFNNTAYPSEFYGPTGPEASQA. Glu-367 provides a ligand contact to [CaMn4O5] cluster. Residues 447–471 form a helical membrane-spanning segment; the sequence is RARAAAAGFEKGIDRDTEPVLFMNP.

It belongs to the PsbB/PsbC family. PsbC subfamily. In terms of assembly, PSII is composed of 1 copy each of membrane proteins PsbA, PsbB, PsbC, PsbD, PsbE, PsbF, PsbH, PsbI, PsbJ, PsbK, PsbL, PsbM, PsbT, PsbX, PsbY, PsbZ, Psb30/Ycf12, at least 3 peripheral proteins of the oxygen-evolving complex and a large number of cofactors. It forms dimeric complexes. The cofactor is Binds multiple chlorophylls and provides some of the ligands for the Ca-4Mn-5O cluster of the oxygen-evolving complex. It may also provide a ligand for a Cl- that is required for oxygen evolution. PSII binds additional chlorophylls, carotenoids and specific lipids..

Its subcellular location is the plastid. The protein localises to the chloroplast thylakoid membrane. Functionally, one of the components of the core complex of photosystem II (PSII). It binds chlorophyll and helps catalyze the primary light-induced photochemical processes of PSII. PSII is a light-driven water:plastoquinone oxidoreductase, using light energy to abstract electrons from H(2)O, generating O(2) and a proton gradient subsequently used for ATP formation. The polypeptide is Photosystem II CP43 reaction center protein (Zygnema circumcarinatum (Green alga)).